Consider the following 219-residue polypeptide: MRILLIEDDMLIGDGIKTGLSKMGFSVDWFTQGRQGKEALYSAPYDAVILDLTLPGMDGRDILREWREKGQREPVLILTARDALEERVEGLRLGADDYLCKPFALIEVAARLEALMRRTNGQASNELRHGNVMLDPGKRIATLAGEPLTLKPKEFALLELLMRNAGRVLPRKLIEEKLYTWDEEVTSNAVEVHVHHLRRKLGSDFIRTVHGIGYTLGEK.

A Response regulatory domain is found at 2–116 (RILLIEDDML…EVAARLEALM (115 aa)). Residue aspartate 51 is modified to 4-aspartylphosphate. Residues 124–218 (SNELRHGNVM…VHGIGYTLGE (95 aa)) constitute a DNA-binding region (ompR/PhoB-type).

Post-translationally, phosphorylated by QseC.

It is found in the cytoplasm. Member of a two-component regulatory system QseB/QseC. Activates the flagella regulon by activating transcription of FlhDC. Currently it is not known whether this effect is direct or not. This Escherichia coli O157:H7 protein is Transcriptional regulatory protein QseB (qseB).